The sequence spans 72 residues: DNA-directed RNA polymerase subunit Rpo10 (72 aa).

Zn(2+)-binding residues include cysteine 7, cysteine 10, cysteine 53, and cysteine 54.

It belongs to the archaeal Rpo10/eukaryotic RPB10 RNA polymerase subunit family. In terms of assembly, part of the RNA polymerase complex. Zn(2+) is required as a cofactor.

The protein localises to the cytoplasm. It carries out the reaction RNA(n) + a ribonucleoside 5'-triphosphate = RNA(n+1) + diphosphate. Functionally, DNA-dependent RNA polymerase (RNAP) catalyzes the transcription of DNA into RNA using the four ribonucleoside triphosphates as substrates. In Thermoplasma volcanium (strain ATCC 51530 / DSM 4299 / JCM 9571 / NBRC 15438 / GSS1), this protein is DNA-directed RNA polymerase subunit Rpo10.